Consider the following 490-residue polypeptide: Ketol-acid reductoisomerase (NADP(+)) (490 aa).

The 194-residue stretch at Ile-15–Ser-208 folds into the KARI N-terminal Rossmann domain. NADP(+) is bound by residues Cys-45 to Gln-48, Arg-68, Ser-78, and Asp-108 to Gln-110. His-132 is a catalytic residue. Gly-158 is a binding site for NADP(+). 2 consecutive KARI C-terminal knotted domains span residues Ser-209–Ile-344 and Tyr-345–Met-484. The Mg(2+) site is built by Asp-217, Glu-221, Glu-389, and Glu-393. Ser-414 provides a ligand contact to substrate.

The protein belongs to the ketol-acid reductoisomerase family. It depends on Mg(2+) as a cofactor.

The catalysed reaction is (2R)-2,3-dihydroxy-3-methylbutanoate + NADP(+) = (2S)-2-acetolactate + NADPH + H(+). It carries out the reaction (2R,3R)-2,3-dihydroxy-3-methylpentanoate + NADP(+) = (S)-2-ethyl-2-hydroxy-3-oxobutanoate + NADPH + H(+). Its pathway is amino-acid biosynthesis; L-isoleucine biosynthesis; L-isoleucine from 2-oxobutanoate: step 2/4. The protein operates within amino-acid biosynthesis; L-valine biosynthesis; L-valine from pyruvate: step 2/4. Its function is as follows. Involved in the biosynthesis of branched-chain amino acids (BCAA). Catalyzes an alkyl-migration followed by a ketol-acid reduction of (S)-2-acetolactate (S2AL) to yield (R)-2,3-dihydroxy-isovalerate. In the isomerase reaction, S2AL is rearranged via a Mg-dependent methyl migration to produce 3-hydroxy-3-methyl-2-ketobutyrate (HMKB). In the reductase reaction, this 2-ketoacid undergoes a metal-dependent reduction by NADPH to yield (R)-2,3-dihydroxy-isovalerate. The protein is Ketol-acid reductoisomerase (NADP(+)) of Buchnera aphidicola subsp. Melaphis rhois.